A 457-amino-acid polypeptide reads, in one-letter code: Tubulin beta chain (457 aa).

GTP-binding residues include Gln11, Glu69, Ser138, Gly142, Thr143, Gly144, Asn204, and Asn226. A Mg(2+)-binding site is contributed by Glu69. Residues Ser278 and Ser280 each carry the phosphoserine modification. Residues 423–457 (QQYQEATVEDDEEVDENGDFGAPQNQDEPITENFE) form a disordered region. Residues 429–440 (TVEDDEEVDENG) show a composition bias toward acidic residues.

It belongs to the tubulin family. In terms of assembly, dimer of alpha and beta chains. A typical microtubule is a hollow water-filled tube with an outer diameter of 25 nm and an inner diameter of 15 nM. Alpha-beta heterodimers associate head-to-tail to form protofilaments running lengthwise along the microtubule wall with the beta-tubulin subunit facing the microtubule plus end conferring a structural polarity. Microtubules usually have 13 protofilaments but different protofilament numbers can be found in some organisms and specialized cells. Mg(2+) serves as cofactor.

It localises to the cytoplasm. The protein localises to the cytoskeleton. Tubulin is the major constituent of microtubules, a cylinder consisting of laterally associated linear protofilaments composed of alpha- and beta-tubulin heterodimers. Microtubules grow by the addition of GTP-tubulin dimers to the microtubule end, where a stabilizing cap forms. Below the cap, tubulin dimers are in GDP-bound state, owing to GTPase activity of alpha-tubulin. The polypeptide is Tubulin beta chain (TUB2) (Saccharomyces cerevisiae (strain ATCC 204508 / S288c) (Baker's yeast)).